Here is a 127-residue protein sequence, read N- to C-terminus: Aspartate 1-decarboxylase (127 aa).

Residue Ser-25 is the Schiff-base intermediate with substrate; via pyruvic acid of the active site. Ser-25 is subject to Pyruvic acid (Ser). Thr-57 contacts substrate. The active-site Proton donor is the Tyr-58. Substrate is bound at residue 73–75; the sequence is GAA.

It belongs to the PanD family. As to quaternary structure, heterooctamer of four alpha and four beta subunits. Requires pyruvate as cofactor. Is synthesized initially as an inactive proenzyme, which is activated by self-cleavage at a specific serine bond to produce a beta-subunit with a hydroxyl group at its C-terminus and an alpha-subunit with a pyruvoyl group at its N-terminus.

The protein localises to the cytoplasm. It carries out the reaction L-aspartate + H(+) = beta-alanine + CO2. It participates in cofactor biosynthesis; (R)-pantothenate biosynthesis; beta-alanine from L-aspartate: step 1/1. Its function is as follows. Catalyzes the pyruvoyl-dependent decarboxylation of aspartate to produce beta-alanine. The polypeptide is Aspartate 1-decarboxylase (Aliarcobacter butzleri (strain RM4018) (Arcobacter butzleri)).